The primary structure comprises 131 residues: MKILYAYRFQNNEYDIIEFLNKFKELNPDENFKEIDEEYLKKLLTGVIRNQQLIDNLIEKYSKDWPLSRIPMVELELMRIAIYELLFEEEIPISVAIDEAVDLSSIFGVEKAPSFVNGILGSIAVNEVKRE.

Belongs to the NusB family.

Its function is as follows. Involved in transcription antitermination. Required for transcription of ribosomal RNA (rRNA) genes. Binds specifically to the boxA antiterminator sequence of the ribosomal RNA (rrn) operons. The protein is Transcription antitermination protein NusB of Caldicellulosiruptor saccharolyticus (strain ATCC 43494 / DSM 8903 / Tp8T 6331).